The sequence spans 116 residues: Large ribosomal subunit protein bL20c (116 aa).

Belongs to the bacterial ribosomal protein bL20 family.

The protein localises to the plastid. The protein resides in the chloroplast. Its function is as follows. Binds directly to 23S ribosomal RNA and is necessary for the in vitro assembly process of the 50S ribosomal subunit. It is not involved in the protein synthesizing functions of that subunit. The protein is Large ribosomal subunit protein bL20c of Oltmannsiellopsis viridis (Marine flagellate).